The following is a 159-amino-acid chain: Probable deoxyuridine 5'-triphosphate nucleotidohydrolase (159 aa).

The protein belongs to the dCTP deaminase family. Archaeal dUTPase subfamily.

It carries out the reaction dUTP + H2O = dUMP + diphosphate + H(+). It participates in pyrimidine metabolism; dUMP biosynthesis; dUMP from dCTP (dUTP route): step 2/2. This enzyme is involved in nucleotide metabolism: it produces dUMP, the immediate precursor of thymidine nucleotides and it decreases the intracellular concentration of dUTP so that uracil cannot be incorporated into DNA. This Aeropyrum pernix (strain ATCC 700893 / DSM 11879 / JCM 9820 / NBRC 100138 / K1) protein is Probable deoxyuridine 5'-triphosphate nucleotidohydrolase.